A 262-amino-acid chain; its full sequence is 1,2-epoxyphenylacetyl-CoA isomerase (262 aa).

The protein belongs to the enoyl-CoA hydratase/isomerase family.

It catalyses the reaction 2-(1,2-epoxy-1,2-dihydrophenyl)acetyl-CoA = 2-oxepin-2(3H)-ylideneacetyl-CoA. Its pathway is aromatic compound metabolism; phenylacetate degradation. Catalyzes the reversible conversion of the epoxide to 2-oxepin-2(3H)-ylideneacetyl-CoA (oxepin-CoA). This chain is 1,2-epoxyphenylacetyl-CoA isomerase (paaG), found in Escherichia coli (strain K12).